Consider the following 352-residue polypeptide: Mitochondrial ubiquitin ligase activator of NFKB 1 (352 aa).

Residues Met1–Ser8 lie on the Cytoplasmic side of the membrane. Residues Leu9 to Tyr29 traverse the membrane as a helical segment. Residues Arg30–Arg238 lie on the Mitochondrial intermembrane side of the membrane. Lys52 is covalently cross-linked (Glycyl lysine isopeptide (Lys-Gly) (interchain with G-Cter in ubiquitin)). A helical membrane pass occupies residues Leu239 to Leu259. The Cytoplasmic portion of the chain corresponds to Arg260–Ser352. Residues Lys273 and Lys299 each participate in a glycyl lysine isopeptide (Lys-Gly) (interchain with G-Cter in ubiquitin) cross-link. The RING-type zinc finger occupies Cys302–Arg340.

As to quaternary structure, homooligomer. Interacts with MAP3K7/TAK1. Interacts with UBC9. Interacts with and sumoylates DNM1L. Interacts with MAVS. Interacts with TP53 (via N-terminus); the interaction leads to ubiquitination and proteasomal degradation of TP53. Ubiquitinated by PRKN during mitophagy, leading to its degradation and enhancement of mitophagy. Deubiquitinated by USP30.

Its subcellular location is the mitochondrion outer membrane. It localises to the peroxisome. It catalyses the reaction S-ubiquitinyl-[E2 ubiquitin-conjugating enzyme]-L-cysteine + [acceptor protein]-L-lysine = [E2 ubiquitin-conjugating enzyme]-L-cysteine + N(6)-ubiquitinyl-[acceptor protein]-L-lysine.. Its pathway is protein modification; protein ubiquitination. It participates in protein modification; protein sumoylation. Functionally, exhibits weak E3 ubiquitin-protein ligase activity. E3 ubiquitin ligases accept ubiquitin from an E2 ubiquitin-conjugating enzyme in the form of a thioester and then directly transfer the ubiquitin to targeted substrates. Can ubiquitinate AKT1 preferentially at 'Lys-284' involving 'Lys-48'-linked polyubiquitination and seems to be involved in regulation of Akt signaling by targeting phosphorylated Akt to proteasomal degradation. Mediates polyubiquitination of cytoplasmic TP53 at 'Lys-24' which targets TP53 for proteasomal degradation, thus reducing TP53 levels in the cytoplasm and mitochondrion. Proposed to preferentially act as a SUMO E3 ligase at physiological concentrations. Plays a role in the control of mitochondrial morphology by promoting mitochondrial fragmentation, and influences mitochondrial localization. Likely to promote mitochondrial fission through negatively regulating the mitochondrial fusion proteins MFN1 and MFN2, acting in a pathway that is parallel to the PRKN/PINK1 regulatory pathway. May also be involved in the sumoylation of the membrane fission protein DNM1L. Inhibits cell growth. When overexpressed, activates JNK through MAP3K7/TAK1 and induces caspase-dependent apoptosis. Involved in the modulation of innate immune defense against viruses by inhibiting RIGI-dependent antiviral response. Can mediate RIGI sumoylation and disrupt its polyubiquitination. This Macaca fascicularis (Crab-eating macaque) protein is Mitochondrial ubiquitin ligase activator of NFKB 1 (MUL1).